The primary structure comprises 203 residues: Guanylate kinase (203 aa).

Positions 3–181 constitute a Guanylate kinase-like domain; the sequence is GTLYIVSAPS…ALDDLKAIFR (179 aa). An ATP-binding site is contributed by 10 to 17; sequence APSGAGKT.

Belongs to the guanylate kinase family.

The protein resides in the cytoplasm. It catalyses the reaction GMP + ATP = GDP + ADP. Essential for recycling GMP and indirectly, cGMP. This is Guanylate kinase (gmk) from Pseudomonas aeruginosa (strain ATCC 15692 / DSM 22644 / CIP 104116 / JCM 14847 / LMG 12228 / 1C / PRS 101 / PAO1).